The sequence spans 446 residues: Tryptophan synthase beta chain 2 (446 aa).

An N6-(pyridoxal phosphate)lysine modification is found at Lys-110.

Belongs to the TrpB family. Tetramer of two alpha and two beta chains. Pyridoxal 5'-phosphate is required as a cofactor.

It catalyses the reaction (1S,2R)-1-C-(indol-3-yl)glycerol 3-phosphate + L-serine = D-glyceraldehyde 3-phosphate + L-tryptophan + H2O. Its pathway is amino-acid biosynthesis; L-tryptophan biosynthesis; L-tryptophan from chorismate: step 5/5. The beta subunit is responsible for the synthesis of L-tryptophan from indole and L-serine. The protein is Tryptophan synthase beta chain 2 (trpB2) of Pyrococcus furiosus (strain ATCC 43587 / DSM 3638 / JCM 8422 / Vc1).